Consider the following 89-residue polypeptide: MAKKSKIAKAKKQMAMIEKYADKRQELKAAGDRTALAKLPRDSNPNRLRLRDQTDGRPRGYMRKFGMSRIKFRELAHQGLIPGVKKASW.

Residues 29–62 form a disordered region; the sequence is AAGDRTALAKLPRDSNPNRLRLRDQTDGRPRGYM. The segment covering 49 to 58 has biased composition (basic and acidic residues); the sequence is RLRDQTDGRP.

Belongs to the universal ribosomal protein uS14 family. As to quaternary structure, part of the 30S ribosomal subunit. Contacts proteins S3 and S10.

Binds 16S rRNA, required for the assembly of 30S particles and may also be responsible for determining the conformation of the 16S rRNA at the A site. In Enterococcus faecalis (strain ATCC 700802 / V583), this protein is Small ribosomal subunit protein uS14A.